Consider the following 967-residue polypeptide: Dolichyl-phosphooligosaccharide-protein glycotransferase 1 (967 aa).

Over 1 to 21 (MVKTQIKEKKKDEKVTIPLPG) the chain is Cytoplasmic. A helical transmembrane segment spans residues 22 to 42 (KIKTVLAFLVVLAFAAYGFYI). Over 43 to 112 (RHLTAGKYFS…ISIFGYNELE (70 aa)) the chain is Extracellular. Positions 53 to 55 (DPD) match the DXD motif 1 motif. Mn(2+) is bound at residue D55. The chain crosses the membrane as a helical span at residues 113–133 (AFLLWPPFVGFLSVIGVYLLG). The Cytoplasmic segment spans residues 134-135 (RK). A helical membrane pass occupies residues 136-156 (VLNEWAGMWGAIILSVLTANF). The Extracellular segment spans residues 157–165 (SRTFSGNAR). 2 residues coordinate Mn(2+): R165 and D167. The DXD motif 2 motif lies at 165 to 167 (RGD). Residues 166-186 (GDGPFMMLFTFSAVLMLYYLT) form a helical membrane-spanning segment. The Cytoplasmic segment spans residues 187–193 (EENKNKK). The helical transmembrane segment at 194-214 (IIWGTLFVLLAGISTAAWNGS) threads the bilayer. A topological domain (extracellular) is located at residue P215. Residues 216–236 (FGLMVLLGFASFQTIILFIFG) traverse the membrane as a helical segment. Topologically, residues 237–247 (KINELREFIKE) are cytoplasmic. A helical transmembrane segment spans residues 248–268 (YYPAYLGILAISYLLTIPGIG). Residue K269 is a topological domain, extracellular. Residues 270 to 290 (IGGFVRFAFEVFLGLVFLAIV) form a helical membrane-spanning segment. The Cytoplasmic portion of the chain corresponds to 291 to 306 (MLYGGKYLNYSDKKHR). A helical membrane pass occupies residues 307-327 (FAVVAVIVIAGFAGAYIYVGP). The Extracellular segment spans residues 328–360 (KLFTLMGGAYQSTQVYETVQELAKTDWGDVKVY). The TIXE motif motif lies at 345-348 (TVQE). The helical transmembrane segment at 361–381 (YGVEKPNGIVFFLGLVGAMIV) threads the bilayer. The Cytoplasmic segment spans residues 382-396 (TARYLYKLFKDGRRP). A helical membrane pass occupies residues 397 to 417 (HEELFAITFYVMSIYLLWTAA). A topological domain (extracellular) is located at residue R418. A glycophospholipid is bound at residue R418. A helical membrane pass occupies residues 419 to 439 (FLFLASYAIALMSGVFAGYVL). The Cytoplasmic portion of the chain corresponds to 440–453 (ETVEKMKESIPIKA). A helical membrane pass occupies residues 454-474 (ALGGVIAIMLLLIPLTHGPLL). Over 475 to 967 (AQSAKSMRTT…LEVSASAPHH (493 aa)) the chain is Extracellular. The segment at 511-513 (WWD) is interacts with target acceptor peptide in protein substrate. The short motif at 511–515 (WWDYG) is the WWDYG motif element. Residue Y516 coordinates a glycophospholipid. The DK motif signature appears at 571 to 578 (DWAKFNAI).

The protein belongs to the STT3 family. It depends on Mn(2+) as a cofactor. Mg(2+) serves as cofactor.

The protein resides in the cell membrane. The enzyme catalyses an archaeal dolichyl phosphooligosaccharide + [protein]-L-asparagine = an archaeal dolichyl phosphate + a glycoprotein with the oligosaccharide chain attached by N-beta-D-glycosyl linkage to a protein L-asparagine.. The protein operates within protein modification; protein glycosylation. Its function is as follows. Oligosaccharyl transferase (OST) that catalyzes the initial transfer of a defined glycan (ManNAcXyl(2)GlcAMan(2)GalNAc in P.furiosus) from the lipid carrier dolichol-monophosphate to an asparagine residue within an Asn-X-Ser/Thr consensus motif in nascent polypeptide chains, the first step in protein N-glycosylation. The polypeptide is Dolichyl-phosphooligosaccharide-protein glycotransferase 1 (aglB1) (Pyrococcus furiosus (strain ATCC 43587 / DSM 3638 / JCM 8422 / Vc1)).